The following is a 175-amino-acid chain: uncharacterized protein (175 aa).

It localises to the cytoplasm. The protein resides in the nucleus. This is an uncharacterized protein from Schizosaccharomyces pombe (strain 972 / ATCC 24843) (Fission yeast).